The primary structure comprises 309 residues: L-aminoadipate-semialdehyde dehydrogenase-phosphopantetheinyl transferase (309 aa).

CoA contacts are provided by residues arginine 47, 86–91 (RTAKGK), and 108–111 (NISH). The Mg(2+) site is built by aspartate 129 and glutamate 181. 181 to 185 (ESFIK) is a CoA binding site. At serine 258 the chain carries Phosphoserine.

Belongs to the P-Pant transferase superfamily. AcpS family. In terms of assembly, monomer. It depends on Mg(2+) as a cofactor. In terms of tissue distribution, detected in heart, skeletal muscle, placenta, testis, brain, pancreas, liver and kidney.

Its subcellular location is the cytoplasm. It localises to the cytosol. The catalysed reaction is apo-[ACP] + CoA = holo-[ACP] + adenosine 3',5'-bisphosphate + H(+). It carries out the reaction apo-[ACP] + acetyl-CoA = acetyl-[ACP] + adenosine 3',5'-bisphosphate + H(+). Functionally, catalyzes the post-translational modification of target proteins by phosphopantetheine. Can transfer the 4'-phosphopantetheine moiety from coenzyme A, regardless of whether the CoA is presented in the free thiol form or as an acetyl thioester, to a serine residue of a broad range of acceptors including the acyl carrier domain of FASN. This chain is L-aminoadipate-semialdehyde dehydrogenase-phosphopantetheinyl transferase (AASDHPPT), found in Homo sapiens (Human).